Here is a 64-residue protein sequence, read N- to C-terminus: Large ribosomal subunit protein bL33 (64 aa).

The protein belongs to the bacterial ribosomal protein bL33 family.

In Nostoc sp. (strain PCC 7120 / SAG 25.82 / UTEX 2576), this protein is Large ribosomal subunit protein bL33.